We begin with the raw amino-acid sequence, 309 residues long: Protein EXORDIUM-like 1 (309 aa).

Positions 1–23 are cleaved as a signal peptide; it reads MASFVMGYFLLFAVAFMCLDART.

Belongs to the EXORDIUM family.

The protein resides in the secreted. The protein localises to the extracellular space. It is found in the apoplast. May play a role in a brassinosteroid-dependent regulatory pathway that controls growth and development under low carbon and energy availability. The protein is Protein EXORDIUM-like 1 (EXL1) of Arabidopsis thaliana (Mouse-ear cress).